Reading from the N-terminus, the 238-residue chain is Probable transcriptional regulatory protein LACR_0237 (238 aa).

Belongs to the TACO1 family. YeeN subfamily.

Its subcellular location is the cytoplasm. In Lactococcus lactis subsp. cremoris (strain SK11), this protein is Probable transcriptional regulatory protein LACR_0237.